The following is a 704-amino-acid chain: MALKFAPFASEIELPFYTALSQLKIDHDKLDDSARPVLGLYEPRATQSPDQSSRMRVLGNALSSNEVPSGHIRAEGKIKNVNTIEDFKNMDKQAMLQTSAKQGQIWDAINDGTIYSIPSLLSSFTILSFANLKKYTFTYWFAFPALHSEPAWRKVEQPPKFSAEETTALTEELGTWRYSHDNREHGFFLAKRVYPSSEHPQDPESESTSDLPFKWVIGSLREFESGFFNGVDAKNQYVSFVDPSTYHENPGWMLRNLLVLVRRRYKLDKVQILCYRDNHAKRHVPQSLILILESIYDPEYQSTAPDQIPKVTGWERNSLGKLTAKVTNLAQYMDPAQLADQAVDLNLKLMKWRIAPELNLDAIKNTKCLLLGAGTLGTYVSRLLMGWGVRKITFVDNASVSFSNPVRQPLFDFKDCIDGGAKKAYRASEALQEIYPGVDSTGHVMAVPMLGHPITDEAATKMNFELLQKLIEDHDAIFLLMDTRESRWLPTVMGKAAGKIVMNAALGFDTYVVMRHGVTPEDGGPAALGCYFCNDVVAPSDLLQSVKDQTLDQQCTVTRPGVAPEASSKLVELLASVLQHPLKGAAPAPKLSSNHQSGQLEFDRDPPNHPLGLVPHQIRGFLAAYKTMLISGPSYDCCSACSPKIVNAYKEDGWEFIKRALTEKDYITELSGLAEVQRKAEAAANDVEWDSDEEGMEDEEPELL.

Positions 372 to 377 match the GXGXXG motif motif; sequence GAGTLG. The active-site Glycyl thioester intermediate is the Cys-555. The segment at 660–699 is homodimerization; that stretch reads ALTEKDYITELSGLAEVQRKAEAAANDVEWDSDEEGMEDE. The disordered stretch occupies residues 682–704; sequence AAANDVEWDSDEEGMEDEEPELL. Over residues 687–704 the composition is skewed to acidic residues; sequence VEWDSDEEGMEDEEPELL.

It belongs to the ATG7 family. Homodimer. Interacts with ATG8 through a thioester bond between Cys-555 and the C-terminal Gly of ATG8 and with ATG12 through a thioester bond between Cys-555 and the C-terminal Gly of ATG12. Also interacts with ATG3.

Its subcellular location is the cytoplasm. The protein localises to the preautophagosomal structure. Functionally, E1-like activating enzyme involved in the 2 ubiquitin-like systems required for cytoplasm to vacuole transport (Cvt) and autophagy. Activates ATG12 for its conjugation with ATG5 and ATG8 for its conjugation with phosphatidylethanolamine. Both systems are needed for the ATG8 association to Cvt vesicles and autophagosomes membranes. Autophagy is essential for maintenance of amino acid levels and protein synthesis under nitrogen starvation. Required for selective autophagic degradation of the nucleus (nucleophagy) as well as for mitophagy which contributes to regulate mitochondrial quantity and quality by eliminating the mitochondria to a basal level to fulfill cellular energy requirements and preventing excess ROS production. Required for normal mycelial growth and conidiogenesis, and regulates sclerotial formation. Plays an essential role in pathogenesis. The chain is Ubiquitin-like modifier-activating enzyme atg7 from Botryotinia fuckeliana (strain T4) (Noble rot fungus).